A 296-amino-acid polypeptide reads, in one-letter code: Malate--CoA ligase subunit alpha (296 aa).

CoA-binding positions include 17–20 (TGDK), Lys-43, and 96–98 (ITD). The active-site Tele-phosphohistidine intermediate is the His-251.

This sequence belongs to the succinate/malate CoA ligase alpha subunit family. In terms of assembly, heterotetramer of two alpha and two beta subunits.

The enzyme catalyses (S)-malate + ATP + CoA = (S)-malyl-CoA + ADP + phosphate. The protein operates within one-carbon metabolism; formaldehyde assimilation via serine pathway. The polypeptide is Malate--CoA ligase subunit alpha (mtkB) (Methylorubrum extorquens (strain ATCC 14718 / DSM 1338 / JCM 2805 / NCIMB 9133 / AM1) (Methylobacterium extorquens)).